The following is a 311-amino-acid chain: Malate dehydrogenase (311 aa).

NAD(+)-binding positions include 10–15 (GAGRVG) and D35. R84 and R90 together coordinate substrate. NAD(+)-binding positions include N97 and 120-122 (VTN). Residues N122 and R153 each contribute to the substrate site. H177 serves as the catalytic Proton acceptor.

It belongs to the LDH/MDH superfamily. MDH type 3 family.

The catalysed reaction is (S)-malate + NAD(+) = oxaloacetate + NADH + H(+). In terms of biological role, catalyzes the reversible oxidation of malate to oxaloacetate. The polypeptide is Malate dehydrogenase (Nitrosococcus oceani (strain ATCC 19707 / BCRC 17464 / JCM 30415 / NCIMB 11848 / C-107)).